The primary structure comprises 115 residues: U3-lycotoxin-Ls1i (115 aa).

The N-terminal stretch at 1–20 (MKFVLLFGVFLVTLFSYSSA) is a signal peptide. The propeptide occupies 21–44 (EMLDDFDQADEDELLSLIEKEEAR). Disulfide bonds link Cys-48–Cys-63, Cys-55–Cys-72, Cys-62–Cys-87, and Cys-74–Cys-85.

The protein belongs to the neurotoxin 19 (CSTX) family. 01 subfamily. In terms of tissue distribution, expressed by the venom gland.

The protein localises to the secreted. The protein is U3-lycotoxin-Ls1i of Lycosa singoriensis (Wolf spider).